A 473-amino-acid polypeptide reads, in one-letter code: Arginine biosynthesis bifunctional protein ArgJ, mitochondrial (473 aa).

The substrate site is built by Thr-201, Lys-230, Thr-241, Glu-328, Asn-468, and Thr-473. Thr-241 acts as the Nucleophile in catalysis.

This sequence belongs to the ArgJ family. As to quaternary structure, heterodimer of an alpha and a beta chain. Post-translationally, the alpha and beta chains are autoproteolytically processed from a single precursor protein within the mitochondrion.

It localises to the mitochondrion matrix. It catalyses the reaction N(2)-acetyl-L-ornithine + L-glutamate = N-acetyl-L-glutamate + L-ornithine. It carries out the reaction L-glutamate + acetyl-CoA = N-acetyl-L-glutamate + CoA + H(+). Its pathway is amino-acid biosynthesis; L-arginine biosynthesis; L-ornithine and N-acetyl-L-glutamate from L-glutamate and N(2)-acetyl-L-ornithine (cyclic): step 1/1. It functions in the pathway amino-acid biosynthesis; L-arginine biosynthesis; N(2)-acetyl-L-ornithine from L-glutamate: step 1/4. Its function is as follows. Catalyzes two activities which are involved in the cyclic version of arginine biosynthesis: the synthesis of acetylglutamate from glutamate and acetyl-CoA, and of ornithine by transacetylation between acetylornithine and glutamate. The sequence is that of Arginine biosynthesis bifunctional protein ArgJ, mitochondrial from Ajellomyces capsulatus (strain H143) (Darling's disease fungus).